Here is a 273-residue protein sequence, read N- to C-terminus: Undecaprenyl-diphosphatase (273 aa).

8 helical membrane passes run 13–35, 45–62, 82–102, 108–128, 144–164, 186–206, 219–239, and 250–270; these read GLVEGFTEFLPISSTGHLIVFGN, VFEIAIQLGAVLAVVFEY, FVLNLAIAFIPAAVMGLLFGK, LFNPLSVAVMLVLGGLFILWV, ALRPIDALMIGVAQVFALIPG, TEFSFFLAVPMMVAATAYDVL, LILIGFVAAFVSGLVAVKALL, and FAYYRIVFGIAIIILWLSGWI.

It belongs to the UppP family.

Its subcellular location is the cell inner membrane. The catalysed reaction is di-trans,octa-cis-undecaprenyl diphosphate + H2O = di-trans,octa-cis-undecaprenyl phosphate + phosphate + H(+). Functionally, catalyzes the dephosphorylation of undecaprenyl diphosphate (UPP). Confers resistance to bacitracin. In Neisseria meningitidis serogroup C (strain 053442), this protein is Undecaprenyl-diphosphatase.